Reading from the N-terminus, the 374-residue chain is MAVAPTSYDILMGTFRSPYLYTLTFDVLARKLQVREVNEATGGHNWLDVSPDGNTLYATVWGEPPKLTSYDIVRGGEYATTKLSRNVASQYMSGYVCSNNKAMYSACGPQVDTFLVDDNGTLLDQPAVQSFNLLQGQEKNKANGTLDFGGLRHGGHSADLSPDGTKLYVADIGRNCVWMYHVDRETGLLTEASKNIATRPHDGPRHAWPHPNGRIVYSLQEHSSYVDAFRLTDDNKLEFLEGGCIIPDEKDHDKYWADEVRLSPMADVVFGSTRGLEEGTPGFVTAWNLRPDGTFASTEATHRFQTKTSGGWANAIAVCPNLGPNGEVFMTLTDSEVGFIQILAYTSDKGFEVVDELKISTEKEHIMPATTVWL.

This sequence belongs to the cycloisomerase 2 family. Homotetramer.

It catalyses the reaction (S)-muconolactone = cis,cis-muconate + H(+). It functions in the pathway aromatic compound metabolism; beta-ketoadipate pathway; 5-oxo-4,5-dihydro-2-furylacetate from catechol: step 2/3. Catalyzes a syn cycloisomerization. This is Muconate cycloisomerase 1 from Cutaneotrichosporon cutaneum (Yeast).